Reading from the N-terminus, the 124-residue chain is Putative calmodulin-3 (124 aa).

EF-hand domains follow at residues 1–18 (GCIT…LGQN), 19–54 (PTEA…KIKD), 56–91 (DFEE…LGEK), and 92–124 (LTDE…MMAK). The Ca(2+) site is built by Cys2, Glu7, Asp32, Asp34, Asn36, Thr38, Glu43, Asp69, Asp71, Asn73, and Glu80. Lys91 carries the N6,N6,N6-trimethyllysine modification. Asp105, Asp107, Asp109, Gln111, and Glu116 together coordinate Ca(2+).

Belongs to the calmodulin family. As to expression, not detected in the organs tested.

In terms of biological role, calmodulin mediates the control of a large number of enzymes, ion channels and other proteins by Ca(2+). Among the enzymes to be stimulated by the calmodulin-Ca(2+) complex are a number of protein kinases and phosphatases. This is Putative calmodulin-3 (PCM3) from Solanum tuberosum (Potato).